The following is a 518-amino-acid chain: Cyclin-L2 (518 aa).

Cyclin-like regions lie at residues 81 to 183 (ELIQ…RVLK) and 196 to 280 (KIIV…KILQ). Residues 310 to 518 (AKGLLPGTAP…DHPGHSRHRR (209 aa)) are disordered. Residues Ser-328, Ser-335, Ser-345, Ser-348, and Ser-366 each carry the phosphoserine modification. Residues 382-420 (RSREQSYSRSPSRSASPKRRKSDSGSTSGGSKSQSRSRS) are RS. Low complexity predominate over residues 405–427 (SGSTSGGSKSQSRSRSRSDSPPR). The segment covering 438–450 (SEVRGSRKSKDCK) has biased composition (basic and acidic residues). The span at 455-469 (KPHKSRSRSSSRSRS) shows a compositional bias: basic residues. Basic and acidic residues-rich tracts occupy residues 470 to 479 (RSRERTDNSG) and 487 to 512 (YYRD…DHPG).

This sequence belongs to the cyclin family. Cyclin L subfamily. As to quaternary structure, interacts with CDK11A, CDK11B, CDK12, CDK13 and POLR2A, the hyperphosphorylated C-terminal domain (CTD) of RNA polymerase II. May form a ternary complex with CDK11B and casein kinase II (CKII). Interacts with pre-mRNA-splicing factors, including at least SRSF1, SRSF2 and SRSF7/SLU7. In terms of tissue distribution, widely expressed (at protein level).

The protein resides in the nucleus speckle. It is found in the nucleus. It localises to the nucleoplasm. Functionally, involved in pre-mRNA splicing. May induce cell death, possibly by acting on the transcription and RNA processing of apoptosis-related factors. This Mus musculus (Mouse) protein is Cyclin-L2 (Ccnl2).